The chain runs to 1023 residues: NRPS-like oxidoreductase fscA (1023 aa).

Residues 54–454 (TYGDLNGMAT…NHPFVRQCMV (401 aa)) are adenylation. The region spanning 554–637 (PEDDVIGRQI…SIANHVRSAQ (84 aa)) is the Carrier domain. The residue at position 596 (Ser-596) is an O-(pantetheine 4'-phosphoryl)serine. The Thioester reductase (TE) domain occupies 685-901 (LTGGAGYLGQ…VYDESTTRAR (217 aa)).

The protein belongs to the NRP synthetase family. It depends on pantetheine 4'-phosphate as a cofactor.

It participates in secondary metabolite biosynthesis. NRPS-like oxidoreductasee; part of the fragmented gene cluster that mediates the biosynthesis of fusarochromene, a tryptophan-derived metabolite closely related to a group of mycotoxins including fusarochromanone. Within the pathway, fscA acts as an oxidoreductase that reduces the carboxyl group of 4-hydroxykyrunenine to primary alcohol. The first step of the pathway is the epimerization of L-tryptophan to D-tryptophan in the presence of the NRPS-like tryptophan epimerase fscC. D-tryptophan is subsequently hydroxylated by the tryptophan 6-hydroxylase fscE to yield 6-hydroxytryptophan. The pyrrole ring undergoes cleavaged by the tryptophan 2,3-dioxygenase fscD and is finally converted to 4-hydroxykyrunenine by the hydrolase fscH. The NRPS-like oxidoreductase fscA reduces the carboxyl group to primary alcohol and the DMATS-type prenyltransferase fscG performs prenylation, followed by the formation of a chromene ring catalyzed by the oxidoreductase fscI, which leads to desacetylfusarochromene. Epoxidation by fscF and rearrangement reactions of chromene double bonds convert compound desacetylfusarochromene to fusarochromanones. Although specific acetyltransferases were not found near the fsc gene cluster, several predicted enzymes containing the N-acetyltransferase superfamily domain are present in the genome of F.equiseti. These predicted enzymes may have the potential to convert desacetylfusarochromene to fusarochromene. The sequence is that of NRPS-like oxidoreductase fscA from Fusarium equiseti (Fusarium scirpi).